Consider the following 639-residue polypeptide: Poly(A)-specific ribonuclease PARN (639 aa).

Asp-28 and Glu-30 together coordinate a divalent metal cation. Phosphoserine is present on residues Ser-163 and Ser-167. The region spanning 178–245 (KKFIDQVVEK…ERYIVISKVD (68 aa)) is the R3H domain. N6-acetyllysine is present on Lys-220. A divalent metal cation-binding residues include Asp-292 and Asp-382. Lys-499 is modified (N6-acetyllysine). Ser-530 carries the post-translational modification Phosphoserine. A Phosphoserine; by MAPKAPK2 modification is found at Ser-557. A disordered region spans residues 560–639 (APSTVGKRNL…ATLFEVPDTW (80 aa)). 2 positions are modified to phosphoserine: Ser-583 and Ser-587. Residues 606–615 (KKAKKLKRMK) are compositionally biased toward basic residues. 3 positions are modified to phosphoserine: Ser-619, Ser-623, and Ser-628. Phosphothreonine is present on Thr-631.

This sequence belongs to the CAF1 family. In terms of assembly, homodimer. Found in a mRNA decay complex with RENT1, RENT2 and RENT3B. Interacts with KHSRP. Interacts with CELF1/CUGBP1. Interacts with ZC3HAV1 in an RNA-independent manner. Interacts with DHX36. Mg(2+) serves as cofactor. In terms of processing, phosphorylation by MAPKAPK2, preventing GADD45A mRNA degradation after genotoxic stress. In terms of tissue distribution, ubiquitous.

The protein resides in the nucleus. The protein localises to the cytoplasm. It is found in the nucleolus. It carries out the reaction Exonucleolytic cleavage of poly(A) to 5'-AMP.. Its function is as follows. 3'-exoribonuclease that has a preference for poly(A) tails of mRNAs, thereby efficiently degrading poly(A) tails. Exonucleolytic degradation of the poly(A) tail is often the first step in the decay of eukaryotic mRNAs and is also used to silence certain maternal mRNAs translationally during oocyte maturation and early embryonic development. Interacts with both the 3'-end poly(A) tail and the 5'-end cap structure during degradation, the interaction with the cap structure being required for an efficient degradation of poly(A) tails. Involved in nonsense-mediated mRNA decay, a critical process of selective degradation of mRNAs that contain premature stop codons. Also involved in degradation of inherently unstable mRNAs that contain AU-rich elements (AREs) in their 3'-UTR, possibly via its interaction with KHSRP. Probably mediates the removal of poly(A) tails of AREs mRNAs, which constitutes the first step of destabilization. Also able to recognize and trim poly(A) tails of microRNAs such as MIR21 and H/ACA box snoRNAs (small nucleolar RNAs) leading to microRNAs degradation or snoRNA increased stability. The protein is Poly(A)-specific ribonuclease PARN (PARN) of Homo sapiens (Human).